The chain runs to 506 residues: Deoxyguanosinetriphosphate triphosphohydrolase (506 aa).

In terms of domain architecture, HD spans 66 to 274; the sequence is RLTHSLEVQQ…MEAADDISYC (209 aa).

It belongs to the dGTPase family. Type 1 subfamily. Homotetramer. The cofactor is Mg(2+).

The enzyme catalyses dGTP + H2O = 2'-deoxyguanosine + triphosphate + H(+). In terms of biological role, dGTPase preferentially hydrolyzes dGTP over the other canonical NTPs. This Yersinia pseudotuberculosis serotype O:3 (strain YPIII) protein is Deoxyguanosinetriphosphate triphosphohydrolase.